We begin with the raw amino-acid sequence, 302 residues long: UDP-3-O-acyl-N-acetylglucosamine deacetylase (302 aa).

Zn(2+) is bound by residues histidine 78, histidine 235, and aspartate 239. The active-site Proton donor is histidine 262.

It belongs to the LpxC family. Zn(2+) serves as cofactor.

The catalysed reaction is a UDP-3-O-[(3R)-3-hydroxyacyl]-N-acetyl-alpha-D-glucosamine + H2O = a UDP-3-O-[(3R)-3-hydroxyacyl]-alpha-D-glucosamine + acetate. It functions in the pathway glycolipid biosynthesis; lipid IV(A) biosynthesis; lipid IV(A) from (3R)-3-hydroxytetradecanoyl-[acyl-carrier-protein] and UDP-N-acetyl-alpha-D-glucosamine: step 2/6. In terms of biological role, catalyzes the hydrolysis of UDP-3-O-myristoyl-N-acetylglucosamine to form UDP-3-O-myristoylglucosamine and acetate, the committed step in lipid A biosynthesis. This is UDP-3-O-acyl-N-acetylglucosamine deacetylase from Bdellovibrio bacteriovorus (strain ATCC 15356 / DSM 50701 / NCIMB 9529 / HD100).